The primary structure comprises 371 residues: Putative glutamate--cysteine ligase 2 (371 aa).

It belongs to the glutamate--cysteine ligase type 2 family. YbdK subfamily.

The enzyme catalyses L-cysteine + L-glutamate + ATP = gamma-L-glutamyl-L-cysteine + ADP + phosphate + H(+). In terms of biological role, ATP-dependent carboxylate-amine ligase which exhibits weak glutamate--cysteine ligase activity. This is Putative glutamate--cysteine ligase 2 from Burkholderia thailandensis (strain ATCC 700388 / DSM 13276 / CCUG 48851 / CIP 106301 / E264).